Consider the following 593-residue polypeptide: NADH-quinone oxidoreductase subunit C/D 1 (593 aa).

Residues 1 to 193 (MPWAKEGDLQ…DNLEGLMNYD (193 aa)) are NADH dehydrogenase I subunit C. An NADH dehydrogenase I subunit D region spans residues 217-593 (AQIVLNWGPL…IDPVVGETDR (377 aa)).

This sequence in the N-terminal section; belongs to the complex I 30 kDa subunit family. It in the C-terminal section; belongs to the complex I 49 kDa subunit family. NDH-1 is composed of 13 different subunits. Subunits NuoB, CD, E, F, and G constitute the peripheral sector of the complex.

It localises to the cell inner membrane. It carries out the reaction a quinone + NADH + 5 H(+)(in) = a quinol + NAD(+) + 4 H(+)(out). NDH-1 shuttles electrons from NADH, via FMN and iron-sulfur (Fe-S) centers, to quinones in the respiratory chain. The immediate electron acceptor for the enzyme in this species is believed to be ubiquinone. Couples the redox reaction to proton translocation (for every two electrons transferred, four hydrogen ions are translocated across the cytoplasmic membrane), and thus conserves the redox energy in a proton gradient. This Aquifex aeolicus (strain VF5) protein is NADH-quinone oxidoreductase subunit C/D 1 (nuoC1).